Reading from the N-terminus, the 325-residue chain is Putative HTH-type transcriptional regulatory protein HQ_3058A (325 aa).

The HTH cro/C1-type domain occupies 132-186; sequence LADEREERGWSLGRLATELGVSRRTVSKYEDGMNASIEIAIQLEEVFDEPFSSPL. Positions 143–162 form a DNA-binding region, H-T-H motif; the sequence is LGRLATELGVSRRTVSKYED. The disordered stretch occupies residues 189 to 211; the sequence is MEGAESVRDSEPTPDDPDPDADD. The segment covering 200–211 has biased composition (acidic residues); the sequence is PTPDDPDPDADD.

The protein is Putative HTH-type transcriptional regulatory protein HQ_3058A of Haloquadratum walsbyi (strain DSM 16790 / HBSQ001).